Consider the following 627-residue polypeptide: Phosphomethylpyrimidine synthase (627 aa).

Residues 1–21 are disordered; the sequence is MSVQSNKNLSESAQVDQQSIQ. Residues asparagine 231, methionine 260, tyrosine 289, histidine 325, 345-347, 386-389, and glutamate 425 each bind substrate; these read SRG and DGLR. Histidine 429 is a Zn(2+) binding site. Tyrosine 452 provides a ligand contact to substrate. Histidine 493 is a binding site for Zn(2+). Positions 573, 576, and 581 each coordinate [4Fe-4S] cluster.

This sequence belongs to the ThiC family. In terms of assembly, homodimer. The cofactor is [4Fe-4S] cluster.

It carries out the reaction 5-amino-1-(5-phospho-beta-D-ribosyl)imidazole + S-adenosyl-L-methionine = 4-amino-2-methyl-5-(phosphooxymethyl)pyrimidine + CO + 5'-deoxyadenosine + formate + L-methionine + 3 H(+). It functions in the pathway cofactor biosynthesis; thiamine diphosphate biosynthesis. Functionally, catalyzes the synthesis of the hydroxymethylpyrimidine phosphate (HMP-P) moiety of thiamine from aminoimidazole ribotide (AIR) in a radical S-adenosyl-L-methionine (SAM)-dependent reaction. The protein is Phosphomethylpyrimidine synthase of Stutzerimonas stutzeri (strain A1501) (Pseudomonas stutzeri).